A 677-amino-acid polypeptide reads, in one-letter code: Polyunsaturated fatty acid lipoxygenase ALOX8 (677 aa).

The 124-residue stretch at 2-125 (AKCRVRVSTG…ELVLREGAAK (124 aa)) folds into the PLAT domain. G15, G17, D39, H40, G42, E44, D86, and A87 together coordinate Ca(2+). Residues 126–677 (VSWQDHHPTL…PPLIENSVSI (552 aa)) form the Lipoxygenase domain. The Fe cation site is built by H374, H379, H554, and I677.

It belongs to the lipoxygenase family. Fe cation is required as a cofactor. As to expression, expressed in epidermis and brain. No expression found in heart, spleen, liver, skeletal muscle, kidney or testis.

It localises to the cytoplasm. It is found in the cytosol. Its subcellular location is the membrane. It catalyses the reaction (9Z,12Z)-octadecadienoate + O2 = (9S)-hydroperoxy-(10E,12Z)-octadecadienoate. The catalysed reaction is (5Z,8Z,11Z,14Z)-eicosatetraenoate + O2 = (8S)-hydroperoxy-(5Z,9E,11Z,14Z)-eicosatetraenoate. It carries out the reaction (15S)-hydroperoxy-(5Z,8Z,11Z,13E)-eicosatetraenoate + O2 = (8S,15S)-dihydroperoxy-(5Z,9E,11Z,13E)-eicosatetraenoate. The enzyme catalyses (8S)-hydroperoxy-(5Z,9E,11Z,14Z)-eicosatetraenoate + O2 = (8S,15S)-dihydroperoxy-(5Z,9E,11Z,13E)-eicosatetraenoate. It catalyses the reaction 1-octadecanoyl-2-(5Z,8Z,11Z,14Z-eicosatetraenoyl)-sn-glycero-3-phosphocholine + O2 = 1-octadecanoyl-2-(15-hydroperoxy-5Z,8Z,11Z,13E-eicosatetraenoyl)-sn-glycero-3-phosphocholine. The catalysed reaction is a 1-acyl-2-(5Z,8Z,11Z,14Z-eicosatetraenoyl)-sn-glycero-3-phospho-(1D-myo-inositol) + O2 = a 1-acyl-2-(15-hydroperoxy-5Z,8Z,11Z,13E-eicosatetraenoyl)-sn-glycero-3-phospho-(1D-myo-inositol). It carries out the reaction a 1-acyl-2-(8Z,11Z,14Z-eicosatrienoyl)-sn-glycero-3-phospho-(1D-myo-inositol) + O2 = a 1-acyl-2-(15-hydroperoxy-8Z,11Z,13E-eicosatrienoyl)-sn-glycero-3-phospho-(1D-myo-inositol). The enzyme catalyses (5Z,8Z,11Z,14Z)-eicosatetraenoate + O2 = 9-hydroperoxy-(5Z,7E,11Z,14Z)-eicosatetraenoate. It catalyses the reaction (5Z,8Z,11Z,14Z)-eicosatetraenoate + O2 = 11-hydroperoxy-(5Z,8Z,12E,14Z)-eicosatetraenoate. The catalysed reaction is (8Z,11Z,14Z)-eicosatrienoate + O2 = 15-hydroperoxy-(8Z,11Z,13E)-eicosatrienoate. It functions in the pathway lipid metabolism; hydroperoxy eicosatetraenoic acid biosynthesis. In terms of biological role, non-heme iron-containing dioxygenase that catalyzes the stereo-specific peroxidation of free and esterified polyunsaturated fatty acids generating a spectrum of bioactive lipid mediators. Catalyzes the peroxidation of arachidonate and linoleate into (8S)-HPETE and (9S)-HPODE respectively. In addition to generate (8S)-HPETE from free arachidonic acid (AA), may produce other HETE isomers from phospholipid-esterified polyunsaturated fatty acids and minor products derived from (8S)-HPETE itself that may include leukotriene A4 and 8,15-diHPETE. With free arachidonate as substrate, has no detectable 15S-lipoxygenase activity and only displays a 8S-lipoxygenase activity. However may have a 15S-lipoxygenase activity with (8S)-HPETE to produce (8S,15S)-diHPETE and when oxidizes directly arachidonic acid esterified to membrane-bound phospholipids to produce a phospholipid-esterified 15-HpETE. May also catalyze (15S)-HPETE peroxidation to produce 8,15-diHPETE. May play a role in keratinocyte differentiation through activation of the peroxisome proliferator activated receptor signaling pathway. The polypeptide is Polyunsaturated fatty acid lipoxygenase ALOX8 (Mus musculus (Mouse)).